The sequence spans 158 residues: Pleckstrin homology domain-containing family J member 1 (158 aa).

A PH domain is found at 15–108; it reads PTQRAAELGM…WIDAIIKASY (94 aa).

The polypeptide is Pleckstrin homology domain-containing family J member 1 (plekhj1) (Danio rerio (Zebrafish)).